The following is a 179-amino-acid chain: Ribosome maturation factor RimM (179 aa).

One can recognise a PRC barrel domain in the interval Lys100–Leu176.

This sequence belongs to the RimM family. In terms of assembly, binds ribosomal protein uS19.

It localises to the cytoplasm. An accessory protein needed during the final step in the assembly of 30S ribosomal subunit, possibly for assembly of the head region. Essential for efficient processing of 16S rRNA. May be needed both before and after RbfA during the maturation of 16S rRNA. It has affinity for free ribosomal 30S subunits but not for 70S ribosomes. This Prochlorococcus marinus (strain MIT 9312) protein is Ribosome maturation factor RimM.